Reading from the N-terminus, the 439-residue chain is Ribosomal protein uS12 methylthiotransferase RimO (439 aa).

The 111-residue stretch at 5–115 folds into the MTTase N-terminal domain; that stretch reads PKIGFVSLGC…LIEAVHTHAP (111 aa). Residues Cys14, Cys50, Cys79, Cys146, Cys150, and Cys153 each contribute to the [4Fe-4S] cluster site. The region spanning 132–369 is the Radical SAM core domain; that stretch reads LTPRHYSYLK…MGLQAQISTD (238 aa). The TRAM domain maps to 372–439; it reads QRFVGTEQQV…ESTEYDLIAD (68 aa).

Belongs to the methylthiotransferase family. RimO subfamily. [4Fe-4S] cluster is required as a cofactor.

The protein localises to the cytoplasm. The enzyme catalyses L-aspartate(89)-[ribosomal protein uS12]-hydrogen + (sulfur carrier)-SH + AH2 + 2 S-adenosyl-L-methionine = 3-methylsulfanyl-L-aspartate(89)-[ribosomal protein uS12]-hydrogen + (sulfur carrier)-H + 5'-deoxyadenosine + L-methionine + A + S-adenosyl-L-homocysteine + 2 H(+). Catalyzes the methylthiolation of an aspartic acid residue of ribosomal protein uS12. The sequence is that of Ribosomal protein uS12 methylthiotransferase RimO from Francisella tularensis subsp. novicida (strain U112).